Reading from the N-terminus, the 614-residue chain is Putative Na(+)/H(+) antiporter YjbQ (614 aa).

A run of 13 helical transmembrane segments spans residues 3 to 23, 32 to 52, 57 to 77, 107 to 127, 130 to 150, 163 to 183, 193 to 213, 225 to 244, 248 to 267, 282 to 302, 307 to 327, 338 to 358, and 368 to 388; these read HTSV…PILL, VVVA…NLVV, WLQT…GLEI, IFVG…LAGF, NAFL…VPTL, IILL…AVFS, MWLL…GRVF, GTIQ…LVAL, LGAE…SLLS, GFLI…WTLF, ILIM…IPVM, IFAS…AATI, and NMSG…PICF. An RCK N-terminal domain is found at 401–519; sequence KKTITFIGAN…EQGISIFSIL (119 aa). The region spanning 533–614 is the RCK C-terminal domain; that stretch reads PGVMKLLTNQ…VTDLKKTLEG (82 aa).

It belongs to the monovalent cation:proton antiporter 2 (CPA2) transporter (TC 2.A.37) family.

Its subcellular location is the cell membrane. Binds cyclic di-AMP (c-di-AMP), which may regulate the transporter activity. Its function is as follows. Probable Na(+)/H(+) antiporter. The polypeptide is Putative Na(+)/H(+) antiporter YjbQ (Bacillus subtilis (strain 168)).